Reading from the N-terminus, the 537-residue chain is Glucocorticoid-induced transcript 1 protein (537 aa).

Disordered regions lie at residues 1–45 (MSTA…APAA) and 62–254 (LLRG…HGNH). Phosphoserine occurs at positions 69, 96, 98, and 99. Residues 69-86 (SPTRPAAAATAAAALGSL) show a composition bias toward low complexity. Over residues 97–106 (PSSPTPPPAA) the composition is skewed to pro residues. At Thr-101 the chain carries Phosphothreonine. Positions 121-136 (RSPESRRRSSSPERRS) are enriched in basic and acidic residues. A compositionally biased stretch (low complexity) spans 152-168 (IRTSSTIRRTSSLDTIT). Phosphoserine is present on residues Ser-162 and Ser-163. A phosphothreonine mark is found at Thr-166 and Thr-168. Positions 178-192 (RDPHVHYPSCMRDKA) are enriched in basic and acidic residues. A Phosphoserine modification is found at Ser-214. Positions 217 to 244 (SADQLKEIAKLRQQLQRSKQSSRHSKEK) form a coiled coil. Residue Ser-248 is modified to Phosphoserine. The residue at position 256 (Thr-256) is a Phosphothreonine. Phosphoserine is present on Ser-293. Positions 309-321 (EVSKPLDIPDGRR) are enriched in basic and acidic residues. Residues 309–407 (EVSKPLDIPD…KPNNSYMFKR (99 aa)) form a disordered region. Residues 329 to 346 (RSSSTRSIDTQTPSVQER) are compositionally biased toward polar residues. At Thr-333 the chain carries Phosphothreonine. Ser-335 is subject to Phosphoserine. Position 340 is a phosphothreonine (Thr-340). Low complexity predominate over residues 347–359 (SSSCSSHSPCVSP). Phosphoserine occurs at positions 384, 388, 396, 402, and 470. The segment at 495–520 (SLSDDTSTADSLEPSAQQPSQQQQLL) is disordered.

As to expression, predominantly expressed in thymus and testis, especially in CD4+CD8+ cells and at specific stages of spermatogenesis.

In Mus musculus (Mouse), this protein is Glucocorticoid-induced transcript 1 protein (Glcci1).